Consider the following 564-residue polypeptide: Arginine--tRNA ligase (564 aa).

The 'HIGH' region motif lies at 136–146; it reads ANPTGPLHMGN.

The protein belongs to the class-I aminoacyl-tRNA synthetase family. As to quaternary structure, monomer.

It is found in the cytoplasm. The enzyme catalyses tRNA(Arg) + L-arginine + ATP = L-arginyl-tRNA(Arg) + AMP + diphosphate. In Acetivibrio thermocellus (strain ATCC 27405 / DSM 1237 / JCM 9322 / NBRC 103400 / NCIMB 10682 / NRRL B-4536 / VPI 7372) (Clostridium thermocellum), this protein is Arginine--tRNA ligase.